A 170-amino-acid polypeptide reads, in one-letter code: 3-hydroxyanthranilate 3,4-dioxygenase (170 aa).

Arginine 44 contacts O2. Residues histidine 48, glutamate 54, and histidine 92 each contribute to the Fe cation site. Substrate is bound at residue glutamate 54. The substrate site is built by arginine 96 and glutamate 106. Positions 121, 124, 158, and 161 each coordinate a divalent metal cation.

The protein belongs to the 3-HAO family. Requires Fe(2+) as cofactor.

The protein resides in the cytoplasm. The catalysed reaction is 3-hydroxyanthranilate + O2 = (2Z,4Z)-2-amino-3-carboxymuconate 6-semialdehyde. The protein operates within cofactor biosynthesis; NAD(+) biosynthesis; quinolinate from L-kynurenine: step 3/3. In terms of biological role, catalyzes the oxidative ring opening of 3-hydroxyanthranilate to 2-amino-3-carboxymuconate semialdehyde, which spontaneously cyclizes to quinolinate. In Scheffersomyces stipitis (strain ATCC 58785 / CBS 6054 / NBRC 10063 / NRRL Y-11545) (Yeast), this protein is 3-hydroxyanthranilate 3,4-dioxygenase.